Consider the following 397-residue polypeptide: Argininosuccinate synthase (397 aa).

8-16 (AYSGGLDTS) lines the ATP pocket. L-citrulline-binding residues include Tyr-86 and Ser-91. ATP is bound at residue Gly-116. L-aspartate is bound by residues Thr-118, Asn-122, and Asp-123. Asn-122 is a binding site for L-citrulline. Residues Arg-126, Ser-175, Ser-184, Glu-260, and Tyr-272 each coordinate L-citrulline.

This sequence belongs to the argininosuccinate synthase family. Type 1 subfamily. Homotetramer.

Its subcellular location is the cytoplasm. It catalyses the reaction L-citrulline + L-aspartate + ATP = 2-(N(omega)-L-arginino)succinate + AMP + diphosphate + H(+). It participates in amino-acid biosynthesis; L-arginine biosynthesis; L-arginine from L-ornithine and carbamoyl phosphate: step 2/3. The polypeptide is Argininosuccinate synthase (Clostridium botulinum (strain ATCC 19397 / Type A)).